Here is a 592-residue protein sequence, read N- to C-terminus: Aspartate--tRNA ligase (592 aa).

Glutamate 171 is a binding site for L-aspartate. The interval 195-198 (QLFK) is aspartate. L-aspartate is bound at residue arginine 217. Residues 217–219 (RDE) and glutamine 226 contribute to the ATP site. L-aspartate is bound at residue histidine 448. Position 482 (glutamate 482) interacts with ATP. Residue arginine 489 participates in L-aspartate binding. 534–537 (GLDR) provides a ligand contact to ATP.

The protein belongs to the class-II aminoacyl-tRNA synthetase family. Type 1 subfamily. As to quaternary structure, homodimer.

The protein resides in the cytoplasm. It catalyses the reaction tRNA(Asp) + L-aspartate + ATP = L-aspartyl-tRNA(Asp) + AMP + diphosphate. In terms of biological role, catalyzes the attachment of L-aspartate to tRNA(Asp) in a two-step reaction: L-aspartate is first activated by ATP to form Asp-AMP and then transferred to the acceptor end of tRNA(Asp). This Vibrio vulnificus (strain YJ016) protein is Aspartate--tRNA ligase.